The following is a 521-amino-acid chain: U4/U6 small nuclear ribonucleoprotein Prp4 (521 aa).

At Lys26 the chain carries N6-acetyllysine. 7 WD repeats span residues 229-268 (DDRPISYCHFSPNSKMLATACWSGLCKLWSVPDCNLLHTL), 271-318 (HNTN…VADI), 321-360 (HTVRVARVTWHPSGRFLGTTCYDRSWRLWDLEAQEEILHQ), 363-402 (HSMGVYDIAFHQDGSLAGTGGLDAFGRVWDLRTGRCIMFL), 405-444 (HLKEIYGINFSPNGYHIATGSGDNTCKVWDLRQRRCVYTI), 447-487 (HQNL…LKTL), and 490-521 (HEGKVMGLDISSDGQLIATCSYDRTFKLWMAE).

In terms of assembly, component of the precatalytic spliceosome (spliceosome B complex). Component of the U4/U6-U5 tri-snRNP complex, a building block of the precatalytic spliceosome (spliceosome B complex). The U4/U6-U5 tri-snRNP complex is composed of the U4, U6 and U5 snRNAs and at least PRPF3, PRPF4, PRPF6, PRPF8, PRPF31, SNRNP200, TXNL4A, SNRNP40, SNRPB, SNRPD1, SNRPD2, SNRPD3, SNRPE, SNRPF, SNRPG, DDX23, CD2BP2, PPIH, SNU13, EFTUD2, SART1 and USP39, plus LSM2, LSM3, LSM4, LSM5, LSM6, LSM7 and LSM8. Interacts directly with PRPF18, PPIH and PRPF3. Part of a heteromeric complex containing PPIH, PRPF3 and PRPF4 that is stable in the absence of RNA. Interacts with ERCC6.

The protein resides in the nucleus. It localises to the nucleus speckle. Its function is as follows. Plays a role in pre-mRNA splicing as component of the U4/U6-U5 tri-snRNP complex that is involved in spliceosome assembly, and as component of the precatalytic spliceosome (spliceosome B complex). This is U4/U6 small nuclear ribonucleoprotein Prp4 (PRPF4) from Bos taurus (Bovine).